A 282-amino-acid chain; its full sequence is Undecaprenyl-diphosphatase (282 aa).

The next 7 membrane-spanning stretches (helical) occupy residues 1–21, 40–60, 85–105, 117–137, 196–216, 229–249, and 258–278; these read MTLF…FLPV, GAAF…IYFY, AAMG…GLLF, YWVS…EWSV, FSFL…LYHT, AITA…AFLI, and SIFI…IAAG.

It belongs to the UppP family.

The protein resides in the cell inner membrane. It catalyses the reaction di-trans,octa-cis-undecaprenyl diphosphate + H2O = di-trans,octa-cis-undecaprenyl phosphate + phosphate + H(+). In terms of biological role, catalyzes the dephosphorylation of undecaprenyl diphosphate (UPP). Confers resistance to bacitracin. In Chlorobium phaeobacteroides (strain DSM 266 / SMG 266 / 2430), this protein is Undecaprenyl-diphosphatase.